The sequence spans 150 residues: Calmodulin (150 aa).

EF-hand domains lie at 9 to 44 (EQIA…LGQS), 45 to 80 (PTAA…KMKD), 82 to 117 (DNEE…LGER), and 118 to 150 (LSQE…ISSK). Residues Asp22, Asp24, Asp26, Asn28, Glu33, Asp58, Asp60, Asn62, Thr64, Glu69, Asp95, Asp97, Asn99, Tyr101, Glu106, Asp131, Asp133, Asp135, and Glu142 each contribute to the Ca(2+) site.

This sequence belongs to the calmodulin family. As to quaternary structure, interacts with rng2.

It is found in the cytoplasm. It localises to the cytoskeleton. The protein resides in the microtubule organizing center. The protein localises to the spindle pole body. In terms of biological role, calmodulin mediates the control of a large number of enzymes, ion channels and other proteins by Ca(2+). Among the enzymes to be stimulated by the calmodulin-Ca(2+) complex are a number of protein kinases and phosphatases. The sequence is that of Calmodulin (cam1) from Schizosaccharomyces pombe (strain 972 / ATCC 24843) (Fission yeast).